The sequence spans 157 residues: Phosphopantetheine adenylyltransferase (157 aa).

Substrate is bound at residue Thr-10. Residues 10–11 (TF) and His-18 contribute to the ATP site. The substrate site is built by Lys-42, Leu-74, and Arg-88. Residues 89-91 (GLR), Glu-99, and 124-130 (NAFISSS) contribute to the ATP site.

This sequence belongs to the bacterial CoaD family. In terms of assembly, homohexamer. Mg(2+) is required as a cofactor.

Its subcellular location is the cytoplasm. It carries out the reaction (R)-4'-phosphopantetheine + ATP + H(+) = 3'-dephospho-CoA + diphosphate. It functions in the pathway cofactor biosynthesis; coenzyme A biosynthesis; CoA from (R)-pantothenate: step 4/5. Tightly binds to CoA, which is presumably a feedback inhibitor. Potently inhibited by D-amethopterin, which simultaneously occupies the 4'-phosphopantetheine- and ATP-binding sites; following treatment with D-amethopterin, H.pylori exhibits morphological characteristics associated with cell death, showing that D-amethopterin displays antimicrobial activity. Its function is as follows. Reversibly transfers an adenylyl group from ATP to 4'-phosphopantetheine, yielding dephospho-CoA (dPCoA) and pyrophosphate. This Helicobacter pylori (strain ATCC 700392 / 26695) (Campylobacter pylori) protein is Phosphopantetheine adenylyltransferase.